The chain runs to 293 residues: DNA repair protein RecO (293 aa).

This sequence belongs to the RecO family.

Its function is as follows. Involved in DNA repair and RecF pathway recombination. The sequence is that of DNA repair protein RecO from Cyanothece sp. (strain PCC 7425 / ATCC 29141).